Consider the following 579-residue polypeptide: Arginine--tRNA ligase (579 aa).

The 'HIGH' region motif lies at 128 to 138 (PNLAKEMHVGH).

The protein belongs to the class-I aminoacyl-tRNA synthetase family. As to quaternary structure, monomer.

The protein localises to the cytoplasm. It carries out the reaction tRNA(Arg) + L-arginine + ATP = L-arginyl-tRNA(Arg) + AMP + diphosphate. The polypeptide is Arginine--tRNA ligase (Pseudomonas syringae pv. syringae (strain B728a)).